Here is a 434-residue protein sequence, read N- to C-terminus: APETALA2-like protein 2 (434 aa).

The interval 1–116 (MLLDLNVESP…KTRRGPRSRS (116 aa)) is disordered. Residues 12 to 23 (RSGTSSSSVLNS) are compositionally biased toward low complexity. Residues 25 to 38 (DAGGGGGGGGGGGL) show a composition bias toward gly residues. Pro residues predominate over residues 72-87 (LPPPPPAAPSPAPAWQ). Residues 104-113 (VAKKTRRGPR) show a composition bias toward basic residues. Residues 106-115 (KKTRRGPRSR) carry the Nuclear localization signal motif. 2 DNA-binding regions (AP2/ERF) span residues 118-174 (QYRG…INFN) and 210-267 (KFRG…TNFE). Positions 291–295 (LDLRI) match the EAR motif.

Belongs to the AP2/ERF transcription factor family. AP2 subfamily. May form homodimer. Interacts with TPR2/ASP1.

It localises to the nucleus. Its function is as follows. Probable transcription factor. Involved in spikelet transition. Together with SNB, controls synergistically inflorescence architecture and floral meristem establishment via the regulation of spatio-temporal expression of B- and E-function floral organ identity genes in the lodicules and of spikelet meristem genes. Prevents lemma and palea elongation as well as grain growth. The polypeptide is APETALA2-like protein 2 (Oryza sativa subsp. indica (Rice)).